Reading from the N-terminus, the 1425-residue chain is Nephrocystin-4 (1425 aa).

Ser-145 is modified (phosphoserine). The interval 448–554 (FSLSSDGPTE…VSHLEADLSQ (107 aa)) is disordered. Low complexity-rich tracts occupy residues 473-484 (PASPSGTPAPAA) and 507-530 (SPLS…SQSP). The sufficient for basal bodies localization stretch occupies residues 822–1425 (LTLANVGHAC…ETFCVKVLYQ (604 aa)).

Belongs to the NPHP4 family. As to quaternary structure, interacts with NPHP1 and RPGRIP1L/NPHP8; NPHP1, NPHP4 and RPGRIP1L are proposed to form a functional NPHP1-4-8 module localized to cell-cell contacts and the ciliary transition zone; NPHP4 mediates the interaction between NPHP1 and RPGRIP1L. Interacts with IQCB1/NPHP5; the interaction likely requires additional interactors. Interacts with RPGRIP1, CEP164, JADE1, PALS1, INADL, PARD6A, INVS, DVL2. Interacts with INTU; INTU mediates the interaction between NPHP4 and DAAM1. Interacts with JADE1. Interacts with SPATA7. In terms of tissue distribution, expressed in the retina (at protein level).

The protein resides in the cytoplasm. Its subcellular location is the cytoskeleton. It localises to the cilium basal body. The protein localises to the microtubule organizing center. It is found in the centrosome. The protein resides in the cell junction. Its subcellular location is the tight junction. In terms of biological role, involved in the organization of apical junctions; the function is proposed to implicate a NPHP1-4-8 module. Does not seem to be strictly required for ciliogenesis. Required for building functional cilia. Involved in the organization of the subapical actin network in multiciliated epithelial cells. Seems to recruit INT to basal bodies of motile cilia which subsequently interacts with actin-modifying proteins such as DAAM1. In cooperation with INVS may down-regulate the canonical Wnt pathway and promote the Wnt-PCP pathway by regulating expression and subcellular location of disheveled proteins. Stabilizes protein levels of JADE1 and promotes its translocation to the nucleus leading to cooperative inhibition of canonical Wnt signaling. Acts as negative regulator of the hippo pathway by association with LATS1 and modifying LATS1-dependent phosphorylation and localization of WWTR1/TAZ. The sequence is that of Nephrocystin-4 (Nphp4) from Mus musculus (Mouse).